The chain runs to 390 residues: 1-deoxy-D-xylulose 5-phosphate reductoisomerase (390 aa).

Thr-10, Gly-11, Ser-12, Ile-13, Gly-36, Asn-38, and Asn-124 together coordinate NADPH. Lys-125 is a 1-deoxy-D-xylulose 5-phosphate binding site. Glu-126 serves as a coordination point for NADPH. Asp-150 provides a ligand contact to Mn(2+). 4 residues coordinate 1-deoxy-D-xylulose 5-phosphate: Ser-151, Glu-152, Ser-176, and His-199. Position 152 (Glu-152) interacts with Mn(2+). Gly-205 serves as a coordination point for NADPH. 1-deoxy-D-xylulose 5-phosphate is bound by residues Ser-212, Asn-217, Lys-218, and Glu-221. Glu-221 contacts Mn(2+).

It belongs to the DXR family. Mg(2+) is required as a cofactor. The cofactor is Mn(2+).

It carries out the reaction 2-C-methyl-D-erythritol 4-phosphate + NADP(+) = 1-deoxy-D-xylulose 5-phosphate + NADPH + H(+). Its pathway is isoprenoid biosynthesis; isopentenyl diphosphate biosynthesis via DXP pathway; isopentenyl diphosphate from 1-deoxy-D-xylulose 5-phosphate: step 1/6. In terms of biological role, catalyzes the NADPH-dependent rearrangement and reduction of 1-deoxy-D-xylulose-5-phosphate (DXP) to 2-C-methyl-D-erythritol 4-phosphate (MEP). The chain is 1-deoxy-D-xylulose 5-phosphate reductoisomerase from Microcystis aeruginosa (strain NIES-843 / IAM M-2473).